The chain runs to 139 residues: uncharacterized protein (139 aa).

This is an uncharacterized protein from Halalkalibacterium halodurans (strain ATCC BAA-125 / DSM 18197 / FERM 7344 / JCM 9153 / C-125) (Bacillus halodurans).